Here is a 347-residue protein sequence, read N- to C-terminus: Two pore potassium channel a (347 aa).

The span at 1 to 11 (MDDNSIQQSLL) shows a compositional bias: polar residues. The interval 1 to 49 (MDDNSIQQSLLADNPNVLQRKPSEGVNRFRRCRSTPSTDPLQGPPEKGS) is disordered. Topologically, residues 1–65 (MDDNSIQQSL…LFKEMRPSFR (65 aa)) are cytoplasmic. A helical membrane pass occupies residues 66–86 (LVGLLLFIYLLVGVLAFYAVM). Residues 99–118 (DALYFCVVTMTTVGYGDLVP) constitute an intramembrane region (pore-forming). Residues 125 to 145 (LLACAFVFMGMAVVALFVSKV) traverse the membrane as a helical segment. Residues 146 to 183 (ADYLVEKQEVLFFKALHTNLKGGETKMLRAIETNRIKY) are Cytoplasmic-facing. The chain crosses the membrane as a helical span at residues 184–204 (KFYTNALLLVLSIISGTVFLW). Residues 213–232 (DSFYCVCATITTLGYGDKSF) constitute an intramembrane region (pore-forming). A helical transmembrane segment spans residues 239–259 (VFAVFWIITSTIIMAQFFMYL). The Cytoplasmic portion of the chain corresponds to 260-347 (AEIYTERRQK…YDLTLAQSAQ (88 aa)). 2 consecutive EF-hand domains span residues 276-311 (LTRKMTKMDLEAADLDDDRQVGAAEFVVYKLKELGK) and 315-347 (EEISSFLEEFEKLDVDHSGTLSPYDLTLAQSAQ). Ca(2+) contacts are provided by Asp289, Asp291, Asp293, Gln295, Glu300, Asp328, Asp330, Ser332, Thr334, and Asp339.

The protein belongs to the two pore domain potassium channel (TC 1.A.1.7) family. As to quaternary structure, homodimer.

The protein localises to the vacuole membrane. In terms of biological role, highly selective inward-rectifying potassium channel that is specifically located in the tonoplast of large vacuoles. Functions independently of the voltage difference across the membrane. This Oryza sativa subsp. japonica (Rice) protein is Two pore potassium channel a (TPKA).